The chain runs to 239 residues: Probable transcriptional regulatory protein Sca_0317 (239 aa).

It belongs to the TACO1 family. YeeN subfamily.

Its subcellular location is the cytoplasm. The chain is Probable transcriptional regulatory protein Sca_0317 from Staphylococcus carnosus (strain TM300).